Reading from the N-terminus, the 488-residue chain is Probable 26S proteasome non-ATPase regulatory subunit 3 (488 aa).

A disordered region spans residues 1–20 (MTQDVEMKEQAAPPSNSLSS). The region spanning 240-421 (SRYLFYLGKI…GWMVSKETGD (182 aa)) is the PCI domain. The tract at residues 452-488 (FPPNSHKEKESAEKRRERQQQEQELAKHIAEEDDDDF) is disordered. The span at 456-481 (SHKEKESAEKRRERQQQEQELAKHIA) shows a compositional bias: basic and acidic residues.

Belongs to the proteasome subunit S3 family. In terms of assembly, the 26S proteasome is composed of a core protease, known as the 20S proteasome, capped at one or both ends by the 19S regulatory complex (RC). The RC is composed of at least 18 different subunits in two subcomplexes, the base and the lid, which form the portions proximal and distal to the 20S proteolytic core, respectively.

The protein resides in the nucleus. Functionally, acts as a regulatory subunit of the 26 proteasome which is involved in the ATP-dependent degradation of ubiquitinated proteins. The sequence is that of Probable 26S proteasome non-ATPase regulatory subunit 3 (21D7) from Nicotiana tabacum (Common tobacco).